We begin with the raw amino-acid sequence, 988 residues long: Centrosomal protein of 120 kDa (988 aa).

One can recognise a C2 1 domain in the interval 1-112; sequence MVPKSDQLLI…QETKQAPKWY (112 aa). The tract at residues 354 to 425 is disordered; the sequence is QNGHEAEHSQ…KPTVKGIGSV (72 aa). Residues 384 to 394 show a composition bias toward pro residues; sequence SPAPPPPPNQT. One can recognise a C2 2 domain in the interval 435 to 569; it reads TCGASEVVTS…LSSEKTRFLG (135 aa). Residues 624–644 form a disordered region; the sequence is GVPAVDQKPSSPPPAPCPSEI. Positions 706–929 form a coiled coil; sequence AEYSILEGKL…QYQDCKEIAS (224 aa). Phosphoserine occurs at positions 934 and 938.

It belongs to the CEP120 family. Interacts with TACC2, TACC3, CCDC52, TALPID3. In terms of tissue distribution, ubiquitous. Highly expressed in brain, lung and kidney and weakly expressed in heart, liver, small intestine and limb (at protein level). Expressed in brain.

It localises to the cytoplasm. It is found in the cytoskeleton. The protein resides in the microtubule organizing center. Its subcellular location is the centrosome. In terms of biological role, plays a role in the microtubule-dependent coupling of the nucleus and the centrosome. Involved in the processes that regulate centrosome-mediated interkinetic nuclear migration (INM) of neural progenitors and for proper positioning of neurons during brain development. Also implicated in the migration and selfrenewal of neural progenitors. Required for centriole duplication and maturation during mitosis and subsequent ciliogenesis. Required for the recruitment of CEP295 to the proximal end of new-born centrioles at the centriolar microtubule wall during early S phase in a PLK4-dependent manner. This is Centrosomal protein of 120 kDa (Cep120) from Mus musculus (Mouse).